A 412-amino-acid chain; its full sequence is MGLKHLIEKLEPHFTHGGKLEKYYPLYEAAATIFYTPGQVTRGAAHVRDAIDLKRMMILVWFAVFPAMFWGMYNVGLQTIPALHKLYGTEQLQQVIANNWHYSVAQWLGVSFSADAGWLSMMTLGAVFFLPIYITVFIVGGFWEVLFAIVRKHEINEGFFVTSILFALIVPPTLPLWQAALGISFGVVIAKEIFGGTGRNFLNPALAGRAFLFFAYPAQISGDLVWTAADGFSGATPLSQWASGGGEALVNVATGIPVSWMDAFLGNIPGSIGEVSTLMILIGGAIILFGRVASWRIVAGVMIGMIATATLFNVIGSDTNPMFSMPWYWHLVLGGFAFGMMFMATDPVSASFTDKGKWSYGVLIGVMCVLIRVVNPAYPEGMMLAILFANLFAPLFDYLVVQANIKRRKSRG.

A run of 3 helical transmembrane segments spans residues 57 to 77, 127 to 147, and 163 to 183; these read MILVWFAVFPAMFWGMYNVGL, VFFLPIYITVFIVGGFWEVLF, and SILFALIVPPTLPLWQAALGI. FMN phosphoryl threonine is present on threonine 236. 5 consecutive transmembrane segments (helical) span residues 270-290, 297-317, 322-342, 358-378, and 381-401; these read GSIGEVSTLMILIGGAIILFG, IVAGVMIGMIATATLFNVIGS, MFSMPWYWHLVLGGFAFGMMF, WSYGVLIGVMCVLIRVVNPAY, and GMMLAILFANLFAPLFDYLVV.

It belongs to the NqrB/RnfD family. As to quaternary structure, composed of six subunits; NqrA, NqrB, NqrC, NqrD, NqrE and NqrF. Requires FMN as cofactor.

The protein localises to the cell inner membrane. It carries out the reaction a ubiquinone + n Na(+)(in) + NADH + H(+) = a ubiquinol + n Na(+)(out) + NAD(+). NQR complex catalyzes the reduction of ubiquinone-1 to ubiquinol by two successive reactions, coupled with the transport of Na(+) ions from the cytoplasm to the periplasm. NqrA to NqrE are probably involved in the second step, the conversion of ubisemiquinone to ubiquinol. This Klebsiella pneumoniae (strain 342) protein is Na(+)-translocating NADH-quinone reductase subunit B.